A 255-amino-acid polypeptide reads, in one-letter code: Large ribosomal subunit protein eL8 (255 aa).

Residues 1–16 (MPKAPKKITKPKKAEK) show a composition bias toward basic residues. A disordered region spans residues 1–28 (MPKAPKKITKPKKAEKKKNPLFQAKPRS).

This sequence belongs to the eukaryotic ribosomal protein eL8 family.

This Tetrahymena thermophila protein is Large ribosomal subunit protein eL8 (RPL7A).